Reading from the N-terminus, the 275-residue chain is Chemotaxis protein methyltransferase Cher2 (275 aa).

The region spanning 1-275 (MSTGNLDFEQ…CSPGIIYQAK (275 aa)) is the CheR-type methyltransferase domain. S-adenosyl-L-methionine contacts are provided by residues asparagine 73, threonine 75, arginine 79, glutamate 116, aspartate 145, 201–202 (NL), and 218–219 (RN).

In terms of assembly, monomer.

It catalyses the reaction L-glutamyl-[protein] + S-adenosyl-L-methionine = [protein]-L-glutamate 5-O-methyl ester + S-adenosyl-L-homocysteine. Functionally, methylation of the membrane-bound methyl-accepting chemotaxis proteins (MCP) to form gamma-glutamyl methyl ester residues in MCP. Methylates the McpS chemotaxis receptor. The polypeptide is Chemotaxis protein methyltransferase Cher2 (cheR2) (Pseudomonas putida (strain ATCC 47054 / DSM 6125 / CFBP 8728 / NCIMB 11950 / KT2440)).